A 160-amino-acid chain; its full sequence is Transcriptional repressor NrdR (160 aa).

The segment covering Met1–Thr11 has biased composition (polar residues). Positions Met1–Glu20 are disordered. Residues Cys3–Cys34 fold into a zinc finger. Residues Leu49–Asp139 enclose the ATP-cone domain.

The protein belongs to the NrdR family. Zn(2+) serves as cofactor.

Its function is as follows. Negatively regulates transcription of bacterial ribonucleotide reductase nrd genes and operons by binding to NrdR-boxes. The polypeptide is Transcriptional repressor NrdR (Rhodopseudomonas palustris (strain BisB5)).